Reading from the N-terminus, the 653-residue chain is J protein JJJ2 (653 aa).

In terms of domain architecture, J spans 14–78 (TLYSVLNLKY…KEKMKYDSKL (65 aa)). 2 disordered regions span residues 85–308 (DYSP…SSTE) and 490–512 (VSPK…EENL). Polar residues-rich tracts occupy residues 161–171 (NAKSYQNSKKS) and 187–200 (ATSF…SSSV). A compositionally biased stretch (low complexity) spans 213 to 241 (SGSAVGSESRISSSGSESSSNVNSATGSS). Over residues 298–308 (PVKTTPNSSTE) the composition is skewed to polar residues.

It is found in the cytoplasm. The protein resides in the nucleus. The sequence is that of J protein JJJ2 (JJJ2) from Kluyveromyces lactis (strain ATCC 8585 / CBS 2359 / DSM 70799 / NBRC 1267 / NRRL Y-1140 / WM37) (Yeast).